Here is a 215-residue protein sequence, read N- to C-terminus: Adenylate kinase (215 aa).

Position 10-15 (10-15 (GAGKGT)) interacts with ATP. The tract at residues 30 to 59 (STGDMFRKAIKEETELGKEAKSYMDRGELV) is NMP. AMP-binding positions include Thr-31, Arg-36, 57-59 (ELV), 85-88 (GFPR), and Gln-92. The LID stretch occupies residues 126–163 (GRRICESCGTTYHLVFNPPKVEGICDIDGGKLYQREDD). Position 127 (Arg-127) interacts with ATP. Residues Cys-130 and Cys-133 each contribute to the Zn(2+) site. 136–137 (TY) contacts ATP. Positions 150 and 153 each coordinate Zn(2+). AMP contacts are provided by Arg-160 and Arg-171. Lys-199 is a binding site for ATP.

It belongs to the adenylate kinase family. As to quaternary structure, monomer.

The protein localises to the cytoplasm. The enzyme catalyses AMP + ATP = 2 ADP. The protein operates within purine metabolism; AMP biosynthesis via salvage pathway; AMP from ADP: step 1/1. Catalyzes the reversible transfer of the terminal phosphate group between ATP and AMP. Plays an important role in cellular energy homeostasis and in adenine nucleotide metabolism. The sequence is that of Adenylate kinase from Staphylococcus aureus (strain COL).